We begin with the raw amino-acid sequence, 332 residues long: Delta-aminolevulinic acid dehydratase (332 aa).

The Schiff-base intermediate with substrate role is filled by Lys-202. 2 residues coordinate 5-aminolevulinate: Arg-212 and Lys-225. Residue Lys-256 is the Schiff-base intermediate with substrate of the active site. The 5-aminolevulinate site is built by Ser-282 and Tyr-321.

The protein belongs to the ALAD family. As to quaternary structure, homohexamer.

It carries out the reaction 2 5-aminolevulinate = porphobilinogen + 2 H2O + H(+). It participates in porphyrin-containing compound metabolism; protoporphyrin-IX biosynthesis; coproporphyrinogen-III from 5-aminolevulinate: step 1/4. Its function is as follows. Catalyzes an early step in the biosynthesis of tetrapyrroles. Binds two molecules of 5-aminolevulinate per subunit, each at a distinct site, and catalyzes their condensation to form porphobilinogen. The protein is Delta-aminolevulinic acid dehydratase (hemB) of Rhodobacter capsulatus (Rhodopseudomonas capsulata).